The sequence spans 311 residues: Tyrosine recombinase XerD (311 aa).

One can recognise a Core-binding (CB) domain in the interval 3-88 (DMSAAYVEAF…ALRQFYKFLY (86 aa)). The 190-residue stretch at 109–298 (TLPKTLSIED…LEERLHDLVQ (190 aa)) folds into the Tyr recombinase domain. Catalysis depends on residues Arg-156, Lys-180, His-250, Arg-253, and His-276. The active-site O-(3'-phospho-DNA)-tyrosine intermediate is Tyr-285.

The protein belongs to the 'phage' integrase family. XerD subfamily. Forms a cyclic heterotetrameric complex composed of two molecules of XerC and two molecules of XerD.

It localises to the cytoplasm. In terms of biological role, site-specific tyrosine recombinase, which acts by catalyzing the cutting and rejoining of the recombining DNA molecules. The XerC-XerD complex is essential to convert dimers of the bacterial chromosome into monomers to permit their segregation at cell division. It also contributes to the segregational stability of plasmids. The protein is Tyrosine recombinase XerD of Rhizobium meliloti (strain 1021) (Ensifer meliloti).